The sequence spans 221 residues: Probable nicotinate-nucleotide adenylyltransferase (221 aa).

Belongs to the NadD family.

It catalyses the reaction nicotinate beta-D-ribonucleotide + ATP + H(+) = deamido-NAD(+) + diphosphate. Its pathway is cofactor biosynthesis; NAD(+) biosynthesis; deamido-NAD(+) from nicotinate D-ribonucleotide: step 1/1. Its function is as follows. Catalyzes the reversible adenylation of nicotinate mononucleotide (NaMN) to nicotinic acid adenine dinucleotide (NaAD). The protein is Probable nicotinate-nucleotide adenylyltransferase of Marinomonas sp. (strain MWYL1).